The chain runs to 156 residues: SsrA-binding protein (156 aa).

Belongs to the SmpB family.

Its subcellular location is the cytoplasm. Required for rescue of stalled ribosomes mediated by trans-translation. Binds to transfer-messenger RNA (tmRNA), required for stable association of tmRNA with ribosomes. tmRNA and SmpB together mimic tRNA shape, replacing the anticodon stem-loop with SmpB. tmRNA is encoded by the ssrA gene; the 2 termini fold to resemble tRNA(Ala) and it encodes a 'tag peptide', a short internal open reading frame. During trans-translation Ala-aminoacylated tmRNA acts like a tRNA, entering the A-site of stalled ribosomes, displacing the stalled mRNA. The ribosome then switches to translate the ORF on the tmRNA; the nascent peptide is terminated with the 'tag peptide' encoded by the tmRNA and targeted for degradation. The ribosome is freed to recommence translation, which seems to be the essential function of trans-translation. The sequence is that of SsrA-binding protein from Staphylococcus carnosus (strain TM300).